A 514-amino-acid chain; its full sequence is Probable outer membrane protein pmp12 (514 aa).

An N-terminal signal peptide occupies residues 1 to 21 (MTILRNFLTCSALFLALPAAA).

It belongs to the PMP outer membrane protein family.

The protein resides in the secreted. It localises to the cell wall. It is found in the cell outer membrane. The sequence is that of Probable outer membrane protein pmp12 (pmp12) from Chlamydia pneumoniae (Chlamydophila pneumoniae).